The chain runs to 269 residues: MENYGLFIDVGNTSVKIGIGVIDRLLISYTLSTNNSLSGDTLGIQLLQCINHAEQVINKDITISSCMMSSVVPTMDTLLQYACERFLLCKPHIINQDFIIPLDNHYEEQCEVGADRLVAAYAARRLFPDSKSVVSVDYGTATTFDCVTDNTYLGGLICPGIKSSLQALYTNTAKLPSIILNTASKVPIIGKNTKTSLTHGFLFGFATMTEGIYSKLINVLDGPVTFVATGGFARDMANVVCCFDAVCPDLILDGLHLLWIDCLSKSYSL.

An ATP-binding site is contributed by 9–16 (DVGNTSVK). Residues tyrosine 106 and 113-116 (GADR) contribute to the substrate site. The active-site Proton acceptor is aspartate 115. Position 137 (aspartate 137) interacts with K(+). An ATP-binding site is contributed by threonine 140. Residue threonine 193 participates in substrate binding.

Belongs to the type III pantothenate kinase family. Homodimer. The cofactor is NH4(+). Requires K(+) as cofactor.

It localises to the cytoplasm. The catalysed reaction is (R)-pantothenate + ATP = (R)-4'-phosphopantothenate + ADP + H(+). Its pathway is cofactor biosynthesis; coenzyme A biosynthesis; CoA from (R)-pantothenate: step 1/5. Functionally, catalyzes the phosphorylation of pantothenate (Pan), the first step in CoA biosynthesis. The sequence is that of Type III pantothenate kinase from Lawsonia intracellularis (strain PHE/MN1-00).